The chain runs to 431 residues: Enolase (431 aa).

A (2R)-2-phosphoglycerate-binding site is contributed by Gln167. The active-site Proton donor is Glu209. Residues Asp246, Glu289, and Asp316 each contribute to the Mg(2+) site. 4 residues coordinate (2R)-2-phosphoglycerate: Lys341, Arg370, Ser371, and Lys392. Lys341 functions as the Proton acceptor in the catalytic mechanism.

This sequence belongs to the enolase family. In terms of assembly, component of the RNA degradosome, a multiprotein complex involved in RNA processing and mRNA degradation. The cofactor is Mg(2+).

Its subcellular location is the cytoplasm. It localises to the secreted. The protein localises to the cell surface. The catalysed reaction is (2R)-2-phosphoglycerate = phosphoenolpyruvate + H2O. It participates in carbohydrate degradation; glycolysis; pyruvate from D-glyceraldehyde 3-phosphate: step 4/5. Functionally, catalyzes the reversible conversion of 2-phosphoglycerate (2-PG) into phosphoenolpyruvate (PEP). It is essential for the degradation of carbohydrates via glycolysis. The chain is Enolase from Shewanella loihica (strain ATCC BAA-1088 / PV-4).